The primary structure comprises 2142 residues: U5 small nuclear ribonucleoprotein 200 kDa helicase (2142 aa).

Disordered regions lie at residues 52–74, 211–234, and 366–396; these read MGDR…RQKR, EESE…QDEG, and RQLD…DGGA. The segment covering 369 to 391 has biased composition (basic and acidic residues); sequence DTGKSEDQEEGEARGSKRGKGDA. Residues 490–673 form the Helicase ATP-binding 1 domain; sequence KAALDSDENM…FLRVKPDKGL (184 aa). 503 to 510 is a binding site for ATP; it reads APTGAGKT. The DEIH box motif lies at 615–618; it reads DEIH. Positions 684-917 constitute a Helicase C-terminal 1 domain; it reads SLEQQYIGVT…GTVQHLQDAV (234 aa). Residues 981 to 1286 form the SEC63 1 domain; it reads VTDLGRIASH…GAETQLPVSF (306 aa). One can recognise a Helicase ATP-binding 2 domain in the interval 1337 to 1511; that stretch reads NAVYNSDENV…WLGCNPNATF (175 aa). 1350-1357 contributes to the ATP binding site; it reads APTGSGKM. A DELQ box motif is present at residues 1453-1456; sequence DELQ. Residues 1544-1752 enclose the Helicase C-terminal 2 domain; it reads PVYNAILKYS…TIENKQDAVD (209 aa). Positions 1811-2128 constitute an SEC63 2 domain; that stretch reads PLNLGMIAAY…GCDQEYKFSI (318 aa).

The protein belongs to the helicase family. SKI2 subfamily.

Its subcellular location is the nucleus. The catalysed reaction is ATP + H2O = ADP + phosphate + H(+). Catalyzes the ATP-dependent unwinding of U4/U6 RNA duplices, an essential step in the assembly of a catalytically active spliceosome. Plays a role in pre-mRNA splicing. In Drosophila melanogaster (Fruit fly), this protein is U5 small nuclear ribonucleoprotein 200 kDa helicase.